A 251-amino-acid chain; its full sequence is Octanoyltransferase (251 aa).

The BPL/LPL catalytic domain occupies 56–237 (ADTGDEIWVV…RLIANLDGES (182 aa)). Residues 96-103 (RGGQITYH), 168-170 (ALG), and 181-183 (GLS) each bind substrate. Cys199 serves as the catalytic Acyl-thioester intermediate.

This sequence belongs to the LipB family.

The protein localises to the cytoplasm. The catalysed reaction is octanoyl-[ACP] + L-lysyl-[protein] = N(6)-octanoyl-L-lysyl-[protein] + holo-[ACP] + H(+). Its pathway is protein modification; protein lipoylation via endogenous pathway; protein N(6)-(lipoyl)lysine from octanoyl-[acyl-carrier-protein]: step 1/2. In terms of biological role, catalyzes the transfer of endogenously produced octanoic acid from octanoyl-acyl-carrier-protein onto the lipoyl domains of lipoate-dependent enzymes. Lipoyl-ACP can also act as a substrate although octanoyl-ACP is likely to be the physiological substrate. The protein is Octanoyltransferase of Burkholderia ambifaria (strain ATCC BAA-244 / DSM 16087 / CCUG 44356 / LMG 19182 / AMMD) (Burkholderia cepacia (strain AMMD)).